The sequence spans 586 residues: Phosphomethylpyrimidine synthase (586 aa).

The tract at residues 1-58 (MKQSVSAEQIELKSSLPGSKKVYVDGTREGMKVPMREIEQSDTNGVQNPPIRVYDTSG) is disordered. The span at 22 to 39 (VYVDGTREGMKVPMREIE) shows a compositional bias: basic and acidic residues. Substrate contacts are provided by residues asparagine 193, methionine 222, tyrosine 251, histidine 287, 307–309 (SRG), 348–351 (DGLR), and glutamate 387. Histidine 391 is a Zn(2+) binding site. Tyrosine 414 serves as a coordination point for substrate. Zn(2+) is bound at residue histidine 455. [4Fe-4S] cluster is bound by residues cysteine 535, cysteine 538, and cysteine 543.

This sequence belongs to the ThiC family. The cofactor is [4Fe-4S] cluster.

The enzyme catalyses 5-amino-1-(5-phospho-beta-D-ribosyl)imidazole + S-adenosyl-L-methionine = 4-amino-2-methyl-5-(phosphooxymethyl)pyrimidine + CO + 5'-deoxyadenosine + formate + L-methionine + 3 H(+). It functions in the pathway cofactor biosynthesis; thiamine diphosphate biosynthesis. Its function is as follows. Catalyzes the synthesis of the hydroxymethylpyrimidine phosphate (HMP-P) moiety of thiamine from aminoimidazole ribotide (AIR) in a radical S-adenosyl-L-methionine (SAM)-dependent reaction. The chain is Phosphomethylpyrimidine synthase from Bacillus mycoides (strain KBAB4) (Bacillus weihenstephanensis).